Here is a 403-residue protein sequence, read N- to C-terminus: ESX-5 secretion system protein EccE5 (403 aa).

2 helical membrane-spanning segments follow: residues 9–29 (LALSWARLTTVFVIDLLILIV) and 43–63 (IAWWVGVGIAVLVTLLSVVTY).

Belongs to the EccE family. As to quaternary structure, part of the ESX-5 / type VII secretion system (T7SS), which is composed of cytosolic and membrane components. The ESX-5 membrane complex is composed of EccB5, EccC5, EccD5 and EccE5.

The protein resides in the cell inner membrane. Part of the ESX-5 specialized secretion system, which is responsible for the secretion of EsxN and a number of PE_PGRS and PPE proteins. The chain is ESX-5 secretion system protein EccE5 from Mycobacterium marinum (strain ATCC BAA-535 / M).